We begin with the raw amino-acid sequence, 1033 residues long: NACHT, LRR and PYD domains-containing protein 11 (1033 aa).

The Pyrin domain maps to 1 to 91; that stretch reads MAESDSTDFD…CRKIIGRRNR (91 aa). The 324-residue stretch at 147-470 folds into the NACHT domain; the sequence is LNVFLMGERA…AFLMAVPNYL (324 aa). 153–160 is a binding site for ATP; the sequence is GERASGKT. LRR repeat units lie at residues 588–611, 632–655, 745–768, 802–827, 859–882, and 919–944; these read CCHLRTLKLSVQRIFQNKEPLIRP, MESLRELHIFDNDLNGISERILSK, GGSLRKLTLSSNPLRSDGMNILCD, SPTLRQLDLCVNRLKNYGVLHVTFPL, NEKLRSLEIGSNKIEDAGMQLLCG, and LERLNLLQNHLGNDGVAKLLESLISP.

This sequence belongs to the NLRP family.

Involved in inflammation. The chain is NACHT, LRR and PYD domains-containing protein 11 (NLRP11) from Homo sapiens (Human).